A 29-amino-acid polypeptide reads, in one-letter code: Cyclotide mra2 (29 aa).

3 disulfide bridges follow: Cys4/Cys19, Cys8/Cys21, and Cys13/Cys26.

This is a cyclic peptide. Post-translationally, contains 3 disulfide bonds.

Probably participates in a plant defense mechanism. This chain is Cyclotide mra2, found in Melicytus ramiflorus (Whitey wood).